We begin with the raw amino-acid sequence, 332 residues long: Beta-ketoacyl-[acyl-carrier-protein] synthase III (332 aa).

Residues Cys116 and His255 contribute to the active site. Residues 256–260 (QANLR) are ACP-binding. Asn285 is an active-site residue.

This sequence belongs to the thiolase-like superfamily. FabH family. As to quaternary structure, homodimer.

The protein resides in the cytoplasm. It catalyses the reaction malonyl-[ACP] + acetyl-CoA + H(+) = 3-oxobutanoyl-[ACP] + CO2 + CoA. It functions in the pathway lipid metabolism; fatty acid biosynthesis. In terms of biological role, catalyzes the condensation reaction of fatty acid synthesis by the addition to an acyl acceptor of two carbons from malonyl-ACP. Catalyzes the first condensation reaction which initiates fatty acid synthesis and may therefore play a role in governing the total rate of fatty acid production. Possesses both acetoacetyl-ACP synthase and acetyl transacylase activities. Its substrate specificity determines the biosynthesis of branched-chain and/or straight-chain of fatty acids. This is Beta-ketoacyl-[acyl-carrier-protein] synthase III from Helicobacter hepaticus (strain ATCC 51449 / 3B1).